The chain runs to 394 residues: Elongation factor Tu (394 aa).

Positions 10 to 204 constitute a tr-type G domain; the sequence is RTHINVGTIG…ILDNYIPEPK (195 aa). A G1 region spans residues 19–26; that stretch reads GHVDHGKT. 19-26 contacts GTP; the sequence is GHVDHGKT. Thr-26 contributes to the Mg(2+) binding site. Residues 60–64 are G2; the sequence is GITIN. The segment at 81–84 is G3; the sequence is DCPG. GTP is bound by residues 81 to 85 and 136 to 139; these read DCPGH and NKCD. The G4 stretch occupies residues 136-139; the sequence is NKCD. The tract at residues 174-176 is G5; the sequence is SAL.

This sequence belongs to the TRAFAC class translation factor GTPase superfamily. Classic translation factor GTPase family. EF-Tu/EF-1A subfamily. Monomer.

It is found in the cytoplasm. It carries out the reaction GTP + H2O = GDP + phosphate + H(+). Functionally, GTP hydrolase that promotes the GTP-dependent binding of aminoacyl-tRNA to the A-site of ribosomes during protein biosynthesis. The sequence is that of Elongation factor Tu from Blochmanniella floridana.